The chain runs to 856 residues: Envelope glycoprotein gp160 (856 aa).

Positions 1-22 (MKGSKNQLLIAIVLASAYLIHC) are cleaved as a signal peptide. The Extracellular segment spans residues 23-670 (KQFVTVFYGI…FTSWVRYIQY (648 aa)). The N-linked (GlcNAc...) asparagine; by host glycan is linked to Asn-37. Cys-44 and Cys-57 are disulfide-bonded. N-linked (GlcNAc...) asparagine; by host glycans are attached at residues Asn-70, Asn-79, Asn-112, Asn-116, Asn-128, Asn-133, Asn-142, Asn-182, Asn-183, Asn-196, Asn-228, Asn-231, Asn-238, Asn-262, Asn-268, Asn-279, Asn-290, Asn-300, Asn-355, Asn-390, Asn-400, Asn-440, and Asn-457. 5 disulfide bridges follow: Cys-101–Cys-204, Cys-108–Cys-195, Cys-113–Cys-154, Cys-217–Cys-247, and Cys-227–Cys-239. The interval 113 to 153 (CTRNMTTWTGRTDTQNITIINDTSHARADNCTGLKEEEMID) is V1. Residues 154 to 195 (CQFSMTGLERDKRKQYTEAWYSKDVVCDNNTSSQSKCYMNHC) are V2. The interval 295–328 (CKRPGNKTVLPITFMSGFKFHSQPVINKKPRQAW) is V3. The cysteines at positions 295 and 329 are disulfide-linked. Disulfide bonds link Cys-382–Cys-439 and Cys-389–Cys-412. A V4 region spans residues 389 to 412 (CNMTWFLNWVENRTGQKQRNYAPC). The interval 455 to 460 (QTNITF) is V5. The fusion peptide stretch occupies residues 503-523 (GVFVLGFLGFLATAGSAMGAA). The segment at 566-582 (LQARVTAIEKYLKDQAQ) is immunosuppression. Residues Asn-602, Asn-611, and Asn-627 are each glycosylated (N-linked (GlcNAc...) asparagine; by host). The stretch at 615-636 (QEWEQKVRYLEANISQSLEQAQ) forms a coiled coil. The tract at residues 648–669 (KLNSWDVFTNWLDFTSWVRYIQ) is MPER; binding to GalCer. A helical transmembrane segment spans residues 671–691 (GVYVVVGIVALRIVIYIVQML). The Cytoplasmic portion of the chain corresponds to 692–856 (SRLRKGYRPV…IRQGAELALL (165 aa)). The short motif at 698-701 (YRPV) is the YXXV motif; contains endocytosis signal element. A lipid anchor (S-palmitoyl cysteine; by host) is attached at Cys-764. A Di-leucine internalization motif motif is present at residues 855–856 (LL).

The mature envelope protein (Env) consists of a homotrimer of non-covalently associated gp120-gp41 heterodimers. The resulting complex protrudes from the virus surface as a spike. There seems to be as few as 10 spikes on the average virion. Interacts with human CD4, CCR5 and CXCR4, to form a P4HB/PDI-CD4-CXCR4-gp120 complex. Gp120 also interacts with the C-type lectins CD209/DC-SIGN and CLEC4M/DC-SIGNR (collectively referred to as DC-SIGN(R)). Gp120 and gp41 interact with GalCer. As to quaternary structure, the mature envelope protein (Env) consists of a homotrimer of non-covalently associated gp120-gp41 heterodimers. The resulting complex protrudes from the virus surface as a spike. There seems to be as few as 10 spikes on the average virion. Specific enzymatic cleavages in vivo yield mature proteins. Envelope glycoproteins are synthesized as an inactive precursor that is heavily N-glycosylated and processed likely by host cell furin in the Golgi to yield the mature SU and TM proteins. The cleavage site between SU and TM requires the minimal sequence [KR]-X-[KR]-R. Post-translationally, palmitoylation of the transmembrane protein and of Env polyprotein (prior to its proteolytic cleavage) is essential for their association with host cell membrane lipid rafts. Palmitoylation is therefore required for envelope trafficking to classical lipid rafts, but not for viral replication.

It is found in the virion membrane. The protein resides in the host cell membrane. The protein localises to the host endosome membrane. Its function is as follows. The surface protein gp120 (SU) attaches the virus to the host lymphoid cell by binding to the primary receptor CD4. This interaction induces a structural rearrangement creating a high affinity binding site for a chemokine coreceptor like CXCR4 and/or CCR5. This peculiar 2 stage receptor-interaction strategy allows gp120 to maintain the highly conserved coreceptor-binding site in a cryptic conformation, protected from neutralizing antibodies. Since CD4 also displays a binding site for the disulfide-isomerase P4HB/PDI, a P4HB/PDI-CD4-CXCR4-gp120 complex may form. In that complex, P4HB/PDI could reach and reduce gp120 disulfide bonds, causing major conformational changes in gp120. TXN, another PDI family member could also be involved in disulfide rearrangements in Env during fusion. These changes are transmitted to the transmembrane protein gp41 and are thought to activate its fusogenic potential by unmasking its fusion peptide. Functionally, the surface protein gp120 is a ligand for CD209/DC-SIGN and CLEC4M/DC-SIGNR, which are respectively found on dendritic cells (DCs), and on endothelial cells of liver sinusoids and lymph node sinuses. These interactions allow capture of viral particles at mucosal surfaces by these cells and subsequent transmission to permissive cells. DCs are professional antigen presenting cells, critical for host immunity by inducing specific immune responses against a broad variety of pathogens. They act as sentinels in various tissues where they take up antigen, process it, and present it to T-cells following migration to lymphoid organs. HIV subverts the migration properties of dendritic cells to gain access to CD4+ T-cells in lymph nodes. Virus transmission to permissive T-cells occurs either in trans (without DCs infection, through viral capture and transmission), or in cis (following DCs productive infection, through the usual CD4-gp120 interaction), thereby inducing a robust infection. In trans infection, bound virions remain infectious over days and it is proposed that they are not degraded, but protected in non-lysosomal acidic organelles within the DCs close to the cell membrane thus contributing to the viral infectious potential during DCs' migration from the periphery to the lymphoid tissues. On arrival at lymphoid tissues, intact virions recycle back to DCs' cell surface allowing virus transmission to CD4+ T-cells. Virion capture also seems to lead to MHC-II-restricted viral antigen presentation, and probably to the activation of HIV-specific CD4+ cells. In terms of biological role, the transmembrane protein gp41 (TM) acts as a class I viral fusion protein. Under the current model, the protein has at least 3 conformational states: pre-fusion native state, pre-hairpin intermediate state, and post-fusion hairpin state. During fusion of viral and target intracellular membranes, the coiled coil regions (heptad repeats) assume a trimer-of-hairpins structure, positioning the fusion peptide in close proximity to the C-terminal region of the ectodomain. The formation of this structure appears to drive apposition and subsequent fusion of viral and target cell membranes. Complete fusion occurs in host cell endosomes and is dynamin-dependent, however some lipid transfer might occur at the plasma membrane. The virus undergoes clathrin-dependent internalization long before endosomal fusion, thus minimizing the surface exposure of conserved viral epitopes during fusion and reducing the efficacy of inhibitors targeting these epitopes. Membranes fusion leads to delivery of the nucleocapsid into the cytoplasm. The envelope glycoprotein gp160 precursor down-modulates cell surface CD4 antigen by interacting with it in the endoplasmic reticulum and blocking its transport to the cell surface. Its function is as follows. The gp120-gp41 heterodimer seems to contribute to T-cell depletion during HIV-1 infection. The envelope glycoproteins expressed on the surface of infected cells induce apoptosis through an interaction with uninfected cells expressing the receptor (CD4) and the coreceptors CXCR4 or CCR5. This type of bystander killing may be obtained by at least three distinct mechanisms. First, the interaction between the 2 cells can induce cellular fusion followed by nuclear fusion within the syncytium. Syncytia are condemned to die from apoptosis. Second, the 2 interacting cells may not fuse entirely and simply exchange plasma membrane lipids, after a sort of hemifusion process, followed by rapid death. Third, it is possible that virus-infected cells, on the point of undergoing apoptosis, fuse with CD4-expressing cells, in which case apoptosis is rapidly transmitted from one cell to the other and thus occurs in a sort of contagious fashion. Functionally, the gp120-gp41 heterodimer allows rapid transcytosis of the virus through CD4 negative cells such as simple epithelial monolayers of the intestinal, rectal and endocervical epithelial barriers. Both gp120 and gp41 specifically recognize glycosphingolipids galactosyl-ceramide (GalCer) or 3' sulfo-galactosyl-ceramide (GalS) present in the lipid rafts structures of epithelial cells. Binding to these alternative receptors allows the rapid transcytosis of the virus through the epithelial cells. This transcytotic vesicle-mediated transport of virions from the apical side to the basolateral side of the epithelial cells does not involve infection of the cells themselves. In Human immunodeficiency virus type 2 subtype A (isolate NIH-Z) (HIV-2), this protein is Envelope glycoprotein gp160 (env).